A 571-amino-acid polypeptide reads, in one-letter code: MFCEKPTEKREKSPCRCKNCVLRHSDFLPWPEPIGFTSDRKTDKDNNNHISTLQSVESVVTISDVNERHTTNHYKNHQSNPDEIAYTPNRSGVSSPVNDGASSPTQRGGTTPAPQGGKGGNSPSRVTAQPQAQPTILLIVVNKNDPPPYGQGQSWEYPGQQYSVPGPRGYPGPGPRGYPGPGPRGYPGRGPRGYPGPGPRGYPGQGPRRYSCPGPRGYPGPGSSGRPDPGGGLQGYYYPPSGPGNGTGPSGRPRPQNENEYAYYDRRRYSEAYQNNRNDWRGQPRGYYDGAYAEEHNLNRQPETRRNCQCPEKQQTPPPEETQNAQENDDQQTTKRKSFKRLVGMGVGNTCSCQGPSLMGSNLRSLGNEMDNQEVGRSGNMGTPPNTMEYLSERGSPPEIREVTVTDAKNKTYKCIQVPICISTGKANTCRCCKCAPSPDAENDESFDEDAECICNHEGKCTCVAGNEFPTEFGCECDLTNLEQTLRELIPNAECICYLKKKKRRRKRKKWAPKVYYDRFAGPPFVLNPKPRCLDYGRSPFCNPCYNPCSCAPFAKSCYTCDYNCEGCGRF.

3 disordered regions span residues 71-128, 142-258, and 298-336; these read TNHY…RVTA, NKND…PQNE, and LNRQ…TTKR. Polar residues predominate over residues 88-113; that stretch reads PNRSGVSSPVNDGASSPTQRGGTTPA. A compositionally biased stretch (pro residues) spans 168–184; sequence RGYPGPGPRGYPGPGPR. Positions 205–215 are enriched in low complexity; the sequence is QGPRRYSCPGP. A compositionally biased stretch (gly residues) spans 217-234; the sequence is GYPGPGSSGRPDPGGGLQ. The segment covering 311–326 has biased composition (low complexity); sequence PEKQQTPPPEETQNAQ.

This is an uncharacterized protein from Drosophila melanogaster (Fruit fly).